The primary structure comprises 1068 residues: Probable ATPase FE772_23070 (1068 aa).

217–224 is an ATP binding site; sequence GGGGAGKT.

Involved in defense against bacteriophages. When this probable 4 gene operon (bGSDM-FE772_23060-FE772_23065-FE772_23070) is inserted into E.coli it provides nearly 100-fold protection against phages T5 and T6 and about 8-fold against phage T4. The operon without bGSDM no longer protects against phage. Probably a nucleotide hydrolase, possibly of ATP. This chain is Probable ATPase FE772_23070, found in Lysobacter enzymogenes.